Consider the following 507-residue polypeptide: UDP-glycosyltransferase 73D1 (507 aa).

UDP-alpha-D-glucose contacts are provided by residues Ser298, 359–361 (SPQ), 376–384 (HCGWNSTIE), and 398–401 (FAEQ).

This sequence belongs to the UDP-glycosyltransferase family.

The polypeptide is UDP-glycosyltransferase 73D1 (UGT73D1) (Arabidopsis thaliana (Mouse-ear cress)).